Reading from the N-terminus, the 1192-residue chain is Plakophilin-4 (1192 aa).

The disordered stretch occupies residues 1–31 (MPAPEQASLVEEGQPQTRQEAASTGPGMEPE). Positions 36 to 70 (TILASVKEQELQFQRLTRELEVERQIVASQLERCR) form a coiled coil. The segment at 73–262 (AESPSIASTS…PRPLNPSAYS (190 aa)) is disordered. S75 bears the Phosphoserine mark. Residues 77–86 (SIASTSSTEK) show a composition bias toward polar residues. Residue T84 is modified to Phosphothreonine. 4 positions are modified to phosphoserine: S106, S132, S136, and S139. Polar residues-rich tracts occupy residues 138 to 156 (GSLGNSRSSTQMNSYSDSG), 163 to 204 (FHNS…QPSV), and 214 to 230 (SVPSRAQSPSYVISTGV). S221, S231, and S236 each carry phosphoserine. The span at 231 to 242 (SPSRGSLRTSLG) shows a compositional bias: low complexity. Residues R254 and R270 each carry the omega-N-methylarginine modification. S273 and S281 each carry phosphoserine. A disordered region spans residues 290-310 (SVTSRQTSNPNGPTPQYQTTA). A phosphoserine mark is found at S314, S327, and S337. The tract at residues 323–348 (TRVASPSQGQVGSSSPKRSGMTAVPQ) is disordered. The segment covering 325–338 (VASPSQGQVGSSSP) has biased composition (low complexity). A Phosphotyrosine modification is found at Y372. 3 positions are modified to phosphoserine: S392, S403, and S406. T412 is modified (phosphothreonine). A Phosphotyrosine modification is found at Y415. An ARM 1 repeat occupies 415–455 (YEGRTYYSPVYRSPNHGTVELQGSQTALYRTGSVGIGNLQR). S422, S427, and S438 each carry phosphoserine. Y478 carries the phosphotyrosine modification. Phosphoserine occurs at positions 510, 512, and 515. 5 ARM repeats span residues 518 to 557 (KDPREFAWRDPELPEVIHMLQHQFPSVQANAAAYLQHLCF), 560 to 599 (NKVKMEVCRLGGIKHLVDLLDHRVLEVQKNACGALRNLVF), 604 to 644 (DENK…NLSS), 660 to 702 (LTNT…NLSS), and 706 to 751 (EARK…NLSY). Over residues 773-782 (GKESPSKDSE) the composition is skewed to basic and acidic residues. A disordered region spans residues 773–810 (GKESPSKDSEPSCWGKKKKKKKRTPQEDQWDGVGPIPG). S776 bears the Phosphoserine mark. ARM repeat units follow at residues 815-855 (PKGV…NLSA), 862-901 (AYIRAAVRKEKGLPILVELLRMDNDRVVSSVATALRNMAL), and 950-993 (MENA…TLWQ). T1013 and T1017 each carry phosphothreonine. S1045 is subject to Phosphoserine. Positions 1058 to 1086 (PRSEYDRTQPPMQYYNSQGDATHKGLYPG) are disordered. The span at 1067-1077 (PPMQYYNSQGD) shows a compositional bias: polar residues. Residues S1091, S1100, and S1135 each carry the phosphoserine modification.

The protein belongs to the beta-catenin family. In terms of assembly, interacts with PDZD2. Interacts (via the C-terminus) with FRMPD2 (via the PDZ 2 domain). Interacts with RHOA; the interaction is detected at the midbody. Interacts with ECT2; the interaction is detected at the midbody. Interacts with CCDC85B. In terms of tissue distribution, expressed in salivary glands (at protein level). Expressed in arrector pili muscle (at protein level).

Its subcellular location is the cell junction. It is found in the desmosome. It localises to the cytoplasm. The protein localises to the cytoskeleton. The protein resides in the spindle. Its subcellular location is the midbody. It is found in the cell membrane. Its function is as follows. Plays a role as a regulator of Rho activity during cytokinesis. May play a role in junctional plaques. The sequence is that of Plakophilin-4 (PKP4) from Homo sapiens (Human).